The following is a 590-amino-acid chain: L-gulonolactone oxidase 5 (590 aa).

The first 31 residues, 1 to 31 (MAFGYSPSYCSFWRTLLGLYCLFTLVHTVIS), serve as a signal peptide directing secretion. The 183-residue stretch at 60–242 (STCRAANVAY…SQVTFELQPM (183 aa)) folds into the FAD-binding PCMH-type domain.

It belongs to the oxygen-dependent FAD-linked oxidoreductase family. The cofactor is FAD.

The catalysed reaction is L-gulono-1,4-lactone + O2 = L-ascorbate + H2O2 + H(+). Its pathway is cofactor biosynthesis; L-ascorbate biosynthesis. Catalyzes the oxidation of L-gulono-1,4-lactone to ascorbic acid. L-gulono-1,4-lactone is oxidized to hydrogen peroxide and L-xylo-hexulonolactone which spontaneously isomerizes to L-ascorbate. This chain is L-gulonolactone oxidase 5, found in Arabidopsis thaliana (Mouse-ear cress).